The chain runs to 334 residues: Biotin synthase (334 aa).

The Radical SAM core domain maps to 55 to 285 (GEGGGVHACS…AHPSKIIKFA (231 aa)). The [4Fe-4S] cluster site is built by Cys73, Cys77, and Cys80. [2Fe-2S] cluster contacts are provided by Cys152, Cys213, and Lys283.

Belongs to the radical SAM superfamily. Biotin synthase family. In terms of assembly, homodimer. Requires [4Fe-4S] cluster as cofactor. It depends on [2Fe-2S] cluster as a cofactor.

It carries out the reaction (4R,5S)-dethiobiotin + (sulfur carrier)-SH + 2 reduced [2Fe-2S]-[ferredoxin] + 2 S-adenosyl-L-methionine = (sulfur carrier)-H + biotin + 2 5'-deoxyadenosine + 2 L-methionine + 2 oxidized [2Fe-2S]-[ferredoxin]. The protein operates within cofactor biosynthesis; biotin biosynthesis; biotin from 7,8-diaminononanoate: step 2/2. In terms of biological role, catalyzes the conversion of dethiobiotin (DTB) to biotin by the insertion of a sulfur atom into dethiobiotin via a radical-based mechanism. The chain is Biotin synthase from Chlorobaculum parvum (strain DSM 263 / NCIMB 8327) (Chlorobium vibrioforme subsp. thiosulfatophilum).